The primary structure comprises 210 residues: Thymidylate kinase (210 aa).

11 to 18 (GVDGAGKT) serves as a coordination point for ATP.

It belongs to the thymidylate kinase family.

It catalyses the reaction dTMP + ATP = dTDP + ADP. In terms of biological role, phosphorylation of dTMP to form dTDP in both de novo and salvage pathways of dTTP synthesis. The sequence is that of Thymidylate kinase (tmk) from Mycoplasma genitalium (strain ATCC 33530 / DSM 19775 / NCTC 10195 / G37) (Mycoplasmoides genitalium).